The sequence spans 199 residues: DnaJ homolog subfamily C member 5B (199 aa).

A phosphoserine mark is found at S14 and S16. In terms of domain architecture, J spans 19-84; sequence ALYEILGLHK…SKRNIYDKYG (66 aa).

As to quaternary structure, interacts with the chaperone complex consisting of HSC70 and SGTA. In terms of processing, palmitoylated.

The protein resides in the membrane. In Bos taurus (Bovine), this protein is DnaJ homolog subfamily C member 5B (DNAJC5B).